The chain runs to 266 residues: Proline-rich protein 23A (266 aa).

A compositionally biased stretch (low complexity) spans 1-18; that stretch reads MGSRPRSPSAFPAPWWGQ. Disordered regions lie at residues 1–47 and 197–266; these read MGSR…SLED and EPCA…LFQE. Positions 227–238 are enriched in pro residues; sequence PSSPLQPLPPSP. The span at 255–266 shows a compositional bias: basic residues; sequence PPCKARRRLFQE.

It belongs to the PRR23 family.

The chain is Proline-rich protein 23A (PRR23A) from Homo sapiens (Human).